The chain runs to 498 residues: Phosphatidylserine synthase (498 aa).

The interval M1–R65 is disordered. At M1 to Y92 the chain is on the cytoplasmic side. A compositionally biased stretch (polar residues) spans S7–S25. The chain crosses the membrane as a helical span at residues K93 to V113. The Lumenal segment spans residues R114–N122. The chain crosses the membrane as a helical span at residues L123–P143. Over N144–A153 the chain is Cytoplasmic. Residues V154–F174 traverse the membrane as a helical segment. Residues Q175–M239 lie on the Lumenal side of the membrane. N205 carries an N-linked (GlcNAc...) asparagine glycan. Residues G240 to L260 traverse the membrane as a helical segment. At P261–C266 the chain is on the cytoplasmic side. Residues W267–L287 traverse the membrane as a helical segment. Over K288–R339 the chain is Lumenal. Residues F340 to L360 form a helical membrane-spanning segment. The Cytoplasmic portion of the chain corresponds to K361–P367. The chain crosses the membrane as a helical span at residues P368–V388. Topologically, residues R389–R402 are lumenal. Residues V403–K423 form a helical membrane-spanning segment. Topologically, residues N424–N436 are cytoplasmic. The helical transmembrane segment at I437–Y457 threads the bilayer. The Lumenal portion of the chain corresponds to W458–K498. Residues K465–K498 form a disordered region. The span at P478–S490 shows a compositional bias: low complexity.

This sequence belongs to the phosphatidyl serine synthase family.

The protein localises to the endoplasmic reticulum membrane. The catalysed reaction is a 1,2-diacyl-sn-glycero-3-phosphoethanolamine + L-serine = a 1,2-diacyl-sn-glycero-3-phospho-L-serine + ethanolamine. It participates in phospholipid metabolism; phosphatidylserine biosynthesis. Catalyzes a base-exchange reaction in which the polar head group of phosphatidylethanolamine (PE) is replaced by L-serine. The protein is Phosphatidylserine synthase of Drosophila melanogaster (Fruit fly).